The chain runs to 242 residues: tRNA uridine(34) hydroxylase (242 aa).

Residues 128–222 (DGREVVMLDT…YFEETGGPGY (95 aa)) form the Rhodanese domain. Catalysis depends on Cys182, which acts as the Cysteine persulfide intermediate.

The protein belongs to the TrhO family.

The catalysed reaction is uridine(34) in tRNA + AH2 + O2 = 5-hydroxyuridine(34) in tRNA + A + H2O. Functionally, catalyzes oxygen-dependent 5-hydroxyuridine (ho5U) modification at position 34 in tRNAs. The polypeptide is tRNA uridine(34) hydroxylase (Bordetella avium (strain 197N)).